We begin with the raw amino-acid sequence, 242 residues long: tRNA pseudouridine synthase A (242 aa).

Asp-51 (nucleophile) is an active-site residue. Residue Tyr-107 participates in substrate binding.

The protein belongs to the tRNA pseudouridine synthase TruA family. In terms of assembly, homodimer.

It carries out the reaction uridine(38/39/40) in tRNA = pseudouridine(38/39/40) in tRNA. Functionally, formation of pseudouridine at positions 38, 39 and 40 in the anticodon stem and loop of transfer RNAs. The chain is tRNA pseudouridine synthase A from Helicobacter acinonychis (strain Sheeba).